A 439-amino-acid polypeptide reads, in one-letter code: Na(+)/H(+) antiporter NhaA 1 (439 aa).

11 helical membrane passes run 14–34 (ITGG…ANLA), 60–80 (ISLH…FIGL), 98–118 (ALPL…YYFF), 127–147 (GWGI…AMVG), 156–176 (IFLS…IAIF), 179–199 (EQIF…LAVA), 213–233 (IGLI…TIAG), 303–323 (HPIS…GVIV), 335–355 (IVLG…FLFA), 375–395 (IIGT…ISDL), and 408–428 (VAVL…LISA).

The protein belongs to the NhaA Na(+)/H(+) (TC 2.A.33) antiporter family.

It is found in the cell inner membrane. The catalysed reaction is Na(+)(in) + 2 H(+)(out) = Na(+)(out) + 2 H(+)(in). Na(+)/H(+) antiporter that extrudes sodium in exchange for external protons. In Psychromonas ingrahamii (strain DSM 17664 / CCUG 51855 / 37), this protein is Na(+)/H(+) antiporter NhaA 1.